We begin with the raw amino-acid sequence, 385 residues long: Trans-enoyl reductase tasC (385 aa).

49–52 (VDTK) is a binding site for NADP(+). 136–143 (NSWYTVAW) lines the substrate pocket. NADP(+) contacts are provided by residues 196 to 199 (SSST), 219 to 222 (SARN), and 284 to 285 (LD). Residue 305–309 (GPELM) participates in substrate binding. Residue 374–375 (VS) participates in NADP(+) binding.

It belongs to the zinc-containing alcohol dehydrogenase family. Monomer.

It catalyses the reaction (2S,4S)-4-hydroxy-4-methylglutamate + 8 malonyl-CoA + 3 S-adenosyl-L-methionine + ATP + 8 NADPH + 11 H(+) = (2S)-3-[(2S)-3,5-dioxo-4-[(2E,4R,6R,8E,10E,12E)-4,6,12-trimethyltetradeca-2,8,10,12-tetraenoyl]pyrrolidin-2-yl]-2-hydroxy-2-methylpropanoate + AMP + 3 S-adenosyl-L-homocysteine + 8 CO2 + diphosphate + 8 NADP(+) + 8 CoA + 6 H2O. The enzyme catalyses (2S,4R)-4-hydroxy-4-methylglutamate + 8 malonyl-CoA + 3 S-adenosyl-L-methionine + ATP + 8 NADPH + 11 H(+) = (2R)-3-[(2S)-3,5-dioxo-4-[(2E,4R,6R,8E,10E,12E)-4,6,12-trimethyltetradeca-2,8,10,12-tetraenoyl]pyrrolidin-2-yl]-2-hydroxy-2-methylpropanoate + AMP + 3 S-adenosyl-L-homocysteine + 8 CO2 + diphosphate + 8 NADP(+) + 8 CoA + 6 H2O. Its pathway is secondary metabolite biosynthesis. Functionally, trans-enoyl reductase; part of the gene cluster that mediates the biosynthesis of the tetramic acids Sch210971 and Sch210972, potential anti-HIV fungal natural product that contain a decalin core. The PKS module of tasS together with the enoylreductase tasC catalyze the formation of the polyketide unit which is then conjugated to 4-hydroxyl-4-methyl glutamate (HMG) by the condensation domain of the tasS NRPS module. One unique structural feature of Sch210971 and Sch210972 is the tetramic acid motif proposed to be derived from the non-proteinogenic amino acid HMG, by a Dieckmann-type condensation catalyzed by the reductase domain of tasS. The aldolase tasA catalyzes the aldol condensation of 2 molecules of pyruvic acid to yield the intermediate 4-hydroxyl-4-methyl-2-oxoglutarate (HMOG), which can then be stereoselectively transaminated, may be by tasG, to form HMG. The Diels-Alderase tas3 then uses the Dieckmann product of tasS as substrate and catalyzes the Diels-Alder cycloaddition to form the decalin ring of Sch210971 and Sch210972. This is Trans-enoyl reductase tasC from Hapsidospora irregularis.